A 335-amino-acid chain; its full sequence is Lipoyl synthase (335 aa).

Residues Cys-55, Cys-60, Cys-66, Cys-81, Cys-85, Cys-88, and Ser-292 each coordinate [4Fe-4S] cluster. The 215-residue stretch at 67–281 (WEDREATFLI…SKAAEEIGFL (215 aa)) folds into the Radical SAM core domain.

Belongs to the radical SAM superfamily. Lipoyl synthase family. It depends on [4Fe-4S] cluster as a cofactor.

The protein resides in the cytoplasm. It carries out the reaction [[Fe-S] cluster scaffold protein carrying a second [4Fe-4S](2+) cluster] + N(6)-octanoyl-L-lysyl-[protein] + 2 oxidized [2Fe-2S]-[ferredoxin] + 2 S-adenosyl-L-methionine + 4 H(+) = [[Fe-S] cluster scaffold protein] + N(6)-[(R)-dihydrolipoyl]-L-lysyl-[protein] + 4 Fe(3+) + 2 hydrogen sulfide + 2 5'-deoxyadenosine + 2 L-methionine + 2 reduced [2Fe-2S]-[ferredoxin]. It functions in the pathway protein modification; protein lipoylation via endogenous pathway; protein N(6)-(lipoyl)lysine from octanoyl-[acyl-carrier-protein]: step 2/2. Its function is as follows. Catalyzes the radical-mediated insertion of two sulfur atoms into the C-6 and C-8 positions of the octanoyl moiety bound to the lipoyl domains of lipoate-dependent enzymes, thereby converting the octanoylated domains into lipoylated derivatives. This chain is Lipoyl synthase, found in Kocuria rhizophila (strain ATCC 9341 / DSM 348 / NBRC 103217 / DC2201).